The following is a 190-amino-acid chain: Shikimate kinase (190 aa).

14 to 19 (GSGKST) lines the ATP pocket. Ser-18 lines the Mg(2+) pocket. Positions 36, 60, and 82 each coordinate substrate. Arg-120 contributes to the ATP binding site. Arg-147 serves as a coordination point for substrate.

The protein belongs to the shikimate kinase family. As to quaternary structure, monomer. It depends on Mg(2+) as a cofactor.

Its subcellular location is the cytoplasm. The catalysed reaction is shikimate + ATP = 3-phosphoshikimate + ADP + H(+). It functions in the pathway metabolic intermediate biosynthesis; chorismate biosynthesis; chorismate from D-erythrose 4-phosphate and phosphoenolpyruvate: step 5/7. Catalyzes the specific phosphorylation of the 3-hydroxyl group of shikimic acid using ATP as a cosubstrate. In Chlorobium phaeobacteroides (strain DSM 266 / SMG 266 / 2430), this protein is Shikimate kinase.